The chain runs to 148 residues: UPAR/Ly6 domain-containing protein bero (148 aa).

An N-terminal signal peptide occupies residues Met-1–Ala-23. Intrachain disulfides connect Cys-26/Cys-72, Cys-29/Cys-37, Cys-51/Cys-90, Cys-102/Cys-116, and Cys-119/Cys-124. Asn-68 carries an N-linked (GlcNAc...) asparagine glycan. Asn-125 carries an N-linked (GlcNAc...) asparagine glycan. A lipid anchor (GPI-anchor amidated asparagine) is attached at Asn-125. The propeptide at Gly-126 to Ala-148 is removed in mature form. A helical transmembrane segment spans residues Ser-128–Ala-148.

Belongs to the quiver family.

It is found in the cell membrane. The protein localises to the membrane. It localises to the perikaryon. The protein resides in the cell projection. Its subcellular location is the neuron projection. In terms of biological role, necessary for the maintenance of persistent fluctuating activities and suppression of acute evoked activities in abdominal leucokinin-producing (ABLK) neurons to negatively regulate neuron excitability involved in nociceptive (perception of pain) behavioral responses. This is UPAR/Ly6 domain-containing protein bero from Drosophila melanogaster (Fruit fly).